The chain runs to 271 residues: Ubiquitin thioesterase OTUB1 (271 aa).

An N-acetylalanine modification is found at alanine 2. Position 16 is a phosphoserine (serine 16). Tyrosine 26 is modified (phosphotyrosine). The OTU domain occupies 80–271; sequence SYIRKTRPDG…RPGHYDILYK (192 aa). The active site involves aspartate 88. Cysteine 91 (nucleophile) is an active-site residue. Ubiquitin-conjugating enzyme E2 binding stretches follow at residues 130–138 and 169–177; these read FTEFTIEDF and DYLVVYLRL. The free ubiquitin binding stretch occupies residues 189–195; the sequence is FFEHFIE. Positions 206–213 are ubiquitin-conjugating enzyme E2 binding; sequence QEVEPMCK. 2 free ubiquitin binding regions span residues 214–221 and 245–251; these read ESDHIHII and NPHVFPE. The active site involves histidine 265.

Belongs to the peptidase C65 family. As to quaternary structure, interacts with RNF128. Forms a ternary complex with RNF128 and USP8. Interacts with FUS and RACK1. Interacts with UBE2D1/UBCH5A, UBE2W/UBC16 and UBE2N/UBC13. Phosphorylation at Tyr-26 by SRC and SRMS promotes deubiquitination of RPTOR via a non-catalytic process.

The protein resides in the cytoplasm. It catalyses the reaction Thiol-dependent hydrolysis of ester, thioester, amide, peptide and isopeptide bonds formed by the C-terminal Gly of ubiquitin (a 76-residue protein attached to proteins as an intracellular targeting signal).. With respect to regulation, by free ubiquitin: binding of free ubiquitin triggers conformational changes in the OTU domain and formation of a ubiquitin-binding helix in the N-terminus, promoting binding of the conjugated donor ubiquitin in UBE2N/UBC13 to OTUB1. In terms of biological role, hydrolase that can specifically remove compared to 'Lys-48'-linked conjugated ubiquitin from proteins and plays an important regulatory role at the level of protein turnover by preventing degradation. Regulator of T-cell anergy, a phenomenon that occurs when T-cells are rendered unresponsive to antigen rechallenge and no longer respond to their cognate antigen. Acts via its interaction with RNF128/GRAIL. Surprisingly, it regulates RNF128-mediated ubiquitination, but does not deubiquitinate polyubiquitinated RNF128. Deubiquitinates estrogen receptor alpha (ESR1). Mediates deubiquitination of 'Lys-48'-linked polyubiquitin chains, but not 'Lys-63'-linked polyubiquitin chains. Not able to cleave di-ubiquitin. Also capable of removing NEDD8 from NEDD8 conjugates, but with a much lower preference compared to 'Lys-48'-linked ubiquitin. Plays a key non-catalytic role in DNA repair regulation by inhibiting activity of RNF168, an E3 ubiquitin-protein ligase that promotes accumulation of 'Lys-63'-linked histone H2A and H2AX at DNA damage sites. Inhibits RNF168 independently of ubiquitin thioesterase activity by binding and inhibiting UBE2N/UBC13, the E2 partner of RNF168, thereby limiting spreading of 'Lys-63'-linked histone H2A and H2AX marks. Inhibition occurs by binding to free ubiquitin: free ubiquitin acts as an allosteric regulator that increases affinity for UBE2N/UBC13 and disrupts interaction with UBE2V1. The OTUB1-UBE2N/UBC13-free ubiquitin complex adopts a configuration that mimics a cleaved 'Lys48'-linked di-ubiquitin chain. Acts as a regulator of mTORC1 and mTORC2 complexes. When phosphorylated at Tyr-26, acts as an activator of the mTORC1 complex by mediating deubiquitination of RPTOR via a non-catalytic process: acts by binding and inhibiting the activity of the ubiquitin-conjugating enzyme E2 (UBE2D1/UBCH5A, UBE2W/UBC16 and UBE2N/UBC13), thereby preventing ubiquitination of RPTOR. Can also act as an inhibitor of the mTORC1 and mTORC2 complexes in response to amino acids by mediating non-catalytic deubiquitination of DEPTOR. This chain is Ubiquitin thioesterase OTUB1 (Otub1), found in Mus musculus (Mouse).